Reading from the N-terminus, the 737-residue chain is Acetylcholinesterase (737 aa).

The first 38 residues, 1 to 38, serve as a signal peptide directing secretion; the sequence is MEIRGLLMGRLRLGRRMVPLGLLGVTALLLILPPFALV. A disordered region spans residues 141 to 168; that stretch reads HSGATPRRRGLTRRESNSDANDNDPLVV. The N-linked (GlcNAc...) asparagine glycan is linked to asparagine 220. Cysteines 228 and 255 form a disulfide. Residue serine 360 is the Acyl-ester intermediate of the active site. A disulfide bridge links cysteine 414 with cysteine 427. Catalysis depends on charge relay system residues glutamate 486 and histidine 600. Cysteine 562 and cysteine 683 are oxidised to a cystine. An N-linked (GlcNAc...) asparagine glycan is attached at asparagine 670.

Belongs to the type-B carboxylesterase/lipase family.

The protein resides in the synapse. It catalyses the reaction acetylcholine + H2O = choline + acetate + H(+). In terms of biological role, rapidly hydrolyzes choline released into the synapse. The protein is Acetylcholinesterase (Ace) of Anopheles gambiae (African malaria mosquito).